A 95-amino-acid chain; its full sequence is Putative regulatory protein STH1338 (95 aa).

Belongs to the RemA family.

The sequence is that of Putative regulatory protein STH1338 from Symbiobacterium thermophilum (strain DSM 24528 / JCM 14929 / IAM 14863 / T).